Here is an 828-residue protein sequence, read N- to C-terminus: Periplasmic nitrate reductase (828 aa).

Positions 1–32 form a signal peptide, tat-type signal; the sequence is MNLSRRDFMKTNAAVAAAAVAGLAIPVKNVEA. A 4Fe-4S Mo/W bis-MGD-type domain is found at 38–94; sequence IKWDKAPCRFCGTGCSVLVGTQNGRVVASQGDPDADVNRGLNCIKGYFLPKIMYGKD. [4Fe-4S] cluster is bound by residues cysteine 45, cysteine 48, cysteine 52, and cysteine 80. Mo-bis(molybdopterin guanine dinucleotide)-binding positions include lysine 82, glutamine 149, asparagine 174, cysteine 178, 211–218, 242–246, 261–263, methionine 372, glutamine 376, asparagine 482, 508–509, lysine 531, aspartate 558, and 718–727; these read WGSNMAEM, STFEH, QSD, SD, and TGRVLEHWHT. Residue phenylalanine 794 participates in substrate binding. Positions 802 and 819 each coordinate Mo-bis(molybdopterin guanine dinucleotide).

This sequence belongs to the prokaryotic molybdopterin-containing oxidoreductase family. NasA/NapA/NarB subfamily. Component of the periplasmic nitrate reductase NapAB complex composed of NapA and NapB. [4Fe-4S] cluster serves as cofactor. Requires Mo-bis(molybdopterin guanine dinucleotide) as cofactor. Post-translationally, predicted to be exported by the Tat system. The position of the signal peptide cleavage has not been experimentally proven.

The protein localises to the periplasm. The catalysed reaction is 2 Fe(II)-[cytochrome] + nitrate + 2 H(+) = 2 Fe(III)-[cytochrome] + nitrite + H2O. Its function is as follows. Catalytic subunit of the periplasmic nitrate reductase complex NapAB. Receives electrons from NapB and catalyzes the reduction of nitrate to nitrite. The sequence is that of Periplasmic nitrate reductase from Pasteurella multocida (strain Pm70).